Here is a 300-residue protein sequence, read N- to C-terminus: Actin-related protein 2/3 complex subunit 2-B (300 aa).

It belongs to the ARPC2 family. As to quaternary structure, component of the Arp2/3 complex composed of actr2/arp2, actr3/arp3, arpc1 (arpc1a or arpc1b), arpc2, arpc3, arpc4 and arpc5.

Its subcellular location is the cytoplasm. It localises to the cytoskeleton. It is found in the cell projection. The protein resides in the nucleus. Actin-binding component of the Arp2/3 complex, a multiprotein complex that mediates actin polymerization upon stimulation by nucleation-promoting factor (NPF). The Arp2/3 complex mediates the formation of branched actin networks in the cytoplasm, providing the force for cell motility. In addition to its role in the cytoplasmic cytoskeleton, the Arp2/3 complex also promotes actin polymerization in the nucleus, thereby regulating gene transcription and repair of damaged DNA. The Arp2/3 complex promotes homologous recombination (HR) repair in response to DNA damage by promoting nuclear actin polymerization, leading to drive motility of double-strand breaks (DSBs). The protein is Actin-related protein 2/3 complex subunit 2-B (arpc2-b) of Xenopus laevis (African clawed frog).